We begin with the raw amino-acid sequence, 193 residues long: Superoxide dismutase [Fe] (193 aa).

The Fe cation site is built by His-27, His-74, Asp-157, and His-161.

Belongs to the iron/manganese superoxide dismutase family. As to quaternary structure, homodimer. Fe cation is required as a cofactor.

The enzyme catalyses 2 superoxide + 2 H(+) = H2O2 + O2. Functionally, destroys superoxide anion radicals which are normally produced within the cells and which are toxic to biological systems. This chain is Superoxide dismutase [Fe] (sodB), found in Salmonella typhimurium (strain LT2 / SGSC1412 / ATCC 700720).